The sequence spans 426 residues: Glutamate-1-semialdehyde 2,1-aminomutase (426 aa).

Residue K265 is modified to N6-(pyridoxal phosphate)lysine.

This sequence belongs to the class-III pyridoxal-phosphate-dependent aminotransferase family. HemL subfamily. As to quaternary structure, homodimer. It depends on pyridoxal 5'-phosphate as a cofactor.

It is found in the cytoplasm. It carries out the reaction (S)-4-amino-5-oxopentanoate = 5-aminolevulinate. It functions in the pathway porphyrin-containing compound metabolism; protoporphyrin-IX biosynthesis; 5-aminolevulinate from L-glutamyl-tRNA(Glu): step 2/2. This is Glutamate-1-semialdehyde 2,1-aminomutase from Yersinia pestis bv. Antiqua (strain Antiqua).